A 1852-amino-acid chain; its full sequence is Dihydropyridine-sensitive L-type skeletal muscle calcium channel subunit alpha-1 (1852 aa).

Residues 1–70 (MESGSGGGGG…KTCINIVEWK (70 aa)) are Cytoplasmic-facing. Residues 57–354 (NPFRKTCINI…LVLGALSGEF (298 aa)) form an I repeat. A helical membrane pass occupies residues 71-86 (PFEIIILLTIFANCVA). Residues 87 to 107 (LAVFLPMPEEDTNNTNLTLES) lie on the Extracellular side of the membrane. Asn-99 and Asn-102 each carry an N-linked (GlcNAc...) asparagine glycan. A helical transmembrane segment spans residues 108–127 (LEYIFLVIFTLECFLKIVAY). Residues 128-139 (GLLFHEGAYLRN) are Cytoplasmic-facing. Residues 140 to 155 (CWNILDFVIVFMGLFT) form a helical membrane-spanning segment. Topologically, residues 156–176 (LVVDTINTIAGVPTEKGGGFD) are extracellular. The helical transmembrane segment at 177 to 195 (MKALRAFRVLRPLRLVSGV) threads the bilayer. Residues 196–214 (PSLQVVMSSILKSMLPLFH) are Cytoplasmic-facing. The chain crosses the membrane as a helical span at residues 215-234 (IALLVFFMVHIYAIMGLELF). The Extracellular segment spans residues 235-326 (KCKMHKTCYY…WINDAMGNDW (92 aa)). Asn-274 carries an N-linked (GlcNAc...) asparagine glycan. Residues 327–351 (PWIYFLTLILVGSFFILNLVLGALS) traverse the membrane as a helical segment. At 352-447 (GEFTKEREES…RKCHVWVKSK (96 aa)) the chain is on the cytoplasmic side. Residues 374 to 391 (QQMDEDLEGYMEWITHAE) are binding to the beta subunit. The stretch at 433 to 679 (NVVLRRKCHV…VFLAIAVDNL (247 aa)) is one II repeat. Residues 448–466 (FFNWWVLLVVLLNTLVIAM) traverse the membrane as a helical segment. Residues 467–481 (EHHNQTEGLTSFQDT) are Extracellular-facing. Asn-470 carries an N-linked (GlcNAc...) asparagine glycan. The chain crosses the membrane as a helical span at residues 482-501 (ANVILLACFTIEMVMKMYAF). Residues 502–509 (GPRAYFMS) are Cytoplasmic-facing. The helical transmembrane segment at 510 to 528 (IFNRFDCFVVTIGILEIIL) threads the bilayer. The Extracellular segment spans residues 529–538 (VVSNIMTPLG). A helical membrane pass occupies residues 539 to 557 (ISVMRCIRLLRLFKLTRYW). The Cytoplasmic segment spans residues 558 to 576 (TSLNNLVASLLNSVKSIAS). Residues 577–596 (LLLLLFLFIVIFALLGMQVF) form a helical membrane-spanning segment. Residues 597–651 (GGKFNFPDRVIQRSNFDNFPQALISVFQVLTGEEWDSIMYNGIMAHGGPQSPGIL) are Extracellular-facing. Residues 652–675 (VSIYFIILYVCGNFVLLNVFLAIA) form a helical membrane-spanning segment. Residues 676 to 815 (VDNLAEAESL…KLCHRIVNHT (140 aa)) lie on the Cytoplasmic side of the membrane. The III repeat unit spans residues 802–1084 (HKFRKLCHRI…IFVGFVIVTF (283 aa)). Residues 816–834 (TFTNIILLFILLSSISLAA) form a helical membrane-spanning segment. At 835–850 (EDPIDPRSFRNKVLAY) the chain is on the extracellular side. The helical transmembrane segment at 851–870 (ADIVFTTVFTIEIVLKMTVY) threads the bilayer. Residues 871–882 (GAFLHTGSFCRN) are Cytoplasmic-facing. The helical transmembrane segment at 883–901 (SFNILDLIVVGVSLLSMGM) threads the bilayer. Topologically, residues 902–908 (ESSTISV) are extracellular. Residues 909-927 (VKILRVLRVLRPLRAINRA) form a helical membrane-spanning segment. Over 928-946 (KGLKHVVQCMFVAIKTIGN) the chain is Cytoplasmic. The chain crosses the membrane as a helical span at residues 947–966 (IVLVTMLLDFMFACIGVQLF). Over 967–1056 (KGKLYYCTDP…TGPLYNNRVG (90 aa)) the chain is Extracellular. Residues 1004–1093 (RMWVNSDFNF…FQKQGEQEYK (90 aa)) form a dihydropyridine binding region. The chain crosses the membrane as a helical span at residues 1057–1081 (ISIFFIIYIIIIAFFMMNIFVGFVI). The Cytoplasmic portion of the chain corresponds to 1082–1134 (VTFQKQGEQEYKDCELDKNQRQCVQYALKARPLKCYIPKNPHQYRVWYFVTSC). Residues 1121 to 1405 (NPHQYRVWYF…LFVAIIMDNV (285 aa)) form an IV repeat. Residues 1135–1153 (YFEYLMFFLIMLNTLCLGI) traverse the membrane as a helical segment. Residues 1154–1168 (QHCNQSDHITKLSDT) are Extracellular-facing. Asn-1157 carries N-linked (GlcNAc...) asparagine glycosylation. Residues 1169–1188 (LNLIFTVLFTGEMIVKLIAF) traverse the membrane as a helical segment. The Cytoplasmic portion of the chain corresponds to 1189–1196 (KAKGYFGD). The helical transmembrane segment at 1197-1215 (PWNVFDFIIVVGSIVDVVL) threads the bilayer. Residues 1216-1252 (SEVDAALEARGGLWCLHGCAEVNPMQAIAEAENVRVS) lie on the Extracellular side of the membrane. Residues 1253 to 1271 (ITFFRLFRVLRLIKLLNRS) traverse the membrane as a helical segment. The Cytoplasmic segment spans residues 1272-1290 (EGIRNLLWTFIKSFQALPH). The chain crosses the membrane as a helical span at residues 1291 to 1310 (VGLLIVMLFFIYAVIGMQMF). At 1311 to 1377 (GKVALVDGTE…GEEYTCGSSI (67 aa)) the chain is on the extracellular side. Positions 1358-1424 (LCDAKSDYGP…LGPHHLDEFK (67 aa)) are dihydropyridine binding. Residues 1370–1413 (EYTCGSSIAVFYFLSFYILCAFLIINLFVAIIMDNVDYLTRDWS) are phenylalkylamine binding. The chain crosses the membrane as a helical span at residues 1378-1402 (AVFYFLSFYILCAFLIINLFVAIIM). Topologically, residues 1403–1852 (DNVDYLTRDW…TKPKENTSAV (450 aa)) are cytoplasmic. The EF-hand domain occupies 1418-1453 (HHLDEFKKIWAEYDPEATGRIKHLDVVTLLRRIQPP). Asp-1431, Glu-1433, Thr-1435, Arg-1437, and Asp-1442 together coordinate Ca(2+). The interval 1820–1852 (NRQSGKVTKRKRRPIPVPPGTKSTKPKENTSAV) is disordered.

Belongs to the calcium channel alpha-1 subunit (TC 1.A.1.11) family. In terms of assembly, multisubunit complex consisting of alpha-1, alpha-2, beta and delta subunits in a 1:1:1:1 ratio. The channel activity is directed by the pore-forming and voltage-sensitive alpha-1 subunit. In many cases, this subunit is sufficient to generate voltage-sensitive calcium channel activity. The auxiliary subunits beta and alpha-2/delta linked by a disulfide bridge regulate the channel activity. An additional gamma subunit is present only in skeletal muscle L-type channel. In terms of processing, may be non-phosphorylated. As to expression, skeletal muscle.

It localises to the membrane. Its function is as follows. Voltage-sensitive calcium channels (VSCC) mediate the entry of calcium ions into excitable cells and are also involved in a variety of calcium-dependent processes, including muscle contraction, gene expression, cell motility, cell division and cell death. The isoform alpha-1S gives rise to L-type calcium currents. Long-lasting (L-type) calcium channels belong to the 'high-voltage activated' (HVA) group. They are blocked by dihydropyridines (DHP), phenylalkylamines, and by benzothiazepines. Calcium channels containing the alpha-1S subunit play an important role in excitation-contraction coupling in skeletal muscle. This is Dihydropyridine-sensitive L-type skeletal muscle calcium channel subunit alpha-1 from Cyprinus carpio (Common carp).